Here is a 314-residue protein sequence, read N- to C-terminus: Pantothenate kinase (314 aa).

93–100 (GSVAVGKS) is a binding site for ATP.

Belongs to the prokaryotic pantothenate kinase family.

It is found in the cytoplasm. It catalyses the reaction (R)-pantothenate + ATP = (R)-4'-phosphopantothenate + ADP + H(+). The protein operates within cofactor biosynthesis; coenzyme A biosynthesis; CoA from (R)-pantothenate: step 1/5. This is Pantothenate kinase from Shewanella denitrificans (strain OS217 / ATCC BAA-1090 / DSM 15013).